The sequence spans 131 residues: Small ribosomal subunit protein uS8 (131 aa).

The protein belongs to the universal ribosomal protein uS8 family. As to quaternary structure, part of the 30S ribosomal subunit. Contacts proteins S5 and S12.

Functionally, one of the primary rRNA binding proteins, it binds directly to 16S rRNA central domain where it helps coordinate assembly of the platform of the 30S subunit. The sequence is that of Small ribosomal subunit protein uS8 from Wolbachia pipientis wMel.